We begin with the raw amino-acid sequence, 434 residues long: Eukaryotic translation initiation factor 3 subunit E (434 aa).

One can recognise a PCI domain in the interval 219–392 (FFNHPKGRDL…GHVVMGTQPL (174 aa)).

It belongs to the eIF-3 subunit E family. As to quaternary structure, component of the eukaryotic translation initiation factor 3 (eIF-3) complex. The eIF-3 complex interacts with pix. Interacts with mxt.

It localises to the cytoplasm. Component of the eukaryotic translation initiation factor 3 (eIF-3) complex, which is involved in protein synthesis of a specialized repertoire of mRNAs and, together with other initiation factors, stimulates binding of mRNA and methionyl-tRNAi to the 40S ribosome. The eIF-3 complex specifically targets and initiates translation of a subset of mRNAs involved in cell proliferation. This chain is Eukaryotic translation initiation factor 3 subunit E (eIF3-S6), found in Drosophila ananassae (Fruit fly).